A 505-amino-acid chain; its full sequence is Deoxyguanosinetriphosphate triphosphohydrolase (505 aa).

The HD domain maps to 66-273 (RLTHSMEVQQ…MEAADDISYC (208 aa)).

Belongs to the dGTPase family. Type 1 subfamily. Homotetramer. It depends on Mg(2+) as a cofactor.

It carries out the reaction dGTP + H2O = 2'-deoxyguanosine + triphosphate + H(+). DGTPase preferentially hydrolyzes dGTP over the other canonical NTPs. In Salmonella enteritidis PT4 (strain P125109), this protein is Deoxyguanosinetriphosphate triphosphohydrolase.